The following is an 87-amino-acid chain: MSQAEFDKAAEEVKHLKTKPADEEMLFIYSHYKQATVGDINTERPGMLDFKGKAKWDAWNELKGTSKEDAMKAYIDKVEELKKKYGI.

At S2 the chain carries N-acetylserine. An ACB domain is found at 2–87; the sequence is SQAEFDKAAE…VEELKKKYGI (86 aa). Position 8 is an N6-acetyllysine; alternate (K8). At K8 the chain carries N6-succinyllysine; alternate. Position 14 (K14) interacts with an acyl-CoA. An N6-succinyllysine modification is found at K17. Position 19 is an N6-acetyllysine (K19). Phosphotyrosine is present on Y29. An acyl-CoA-binding positions include 29–33, K51, K55, and Y74; that span reads YSHYK. N6-acetyllysine is present on K51. K55 bears the N6-acetyllysine; alternate mark. The residue at position 55 (K55) is an N6-succinyllysine; alternate. An N6-(2-hydroxyisobutyryl)lysine; alternate modification is found at K55. K55 is modified (N6-malonyllysine; alternate). K77 carries the post-translational modification N6-acetyllysine; alternate. Position 77 is an N6-succinyllysine; alternate (K77).

Belongs to the ACBP family. In terms of assembly, monomer.

The protein resides in the endoplasmic reticulum. The protein localises to the golgi apparatus. In terms of biological role, binds medium- and long-chain acyl-CoA esters with very high affinity and may function as an intracellular carrier of acyl-CoA esters. It is also able to displace diazepam from the benzodiazepine (BZD) recognition site located on the GABA type A receptor. It is therefore possible that this protein also acts as a neuropeptide to modulate the action of the GABA receptor. This is Acyl-CoA-binding protein (DBI) from Bos taurus (Bovine).